A 529-amino-acid chain; its full sequence is T-complex protein 1 subunit delta (529 aa).

It belongs to the TCP-1 chaperonin family. In terms of assembly, heterooligomeric complex of about 850 to 900 kDa that forms two stacked rings, 12 to 16 nm in diameter.

The protein resides in the cytoplasm. Molecular chaperone; assists the folding of proteins upon ATP hydrolysis. Known to play a role, in vitro, in the folding of actin and tubulin. The protein is T-complex protein 1 subunit delta (CCT4) of Candida glabrata (strain ATCC 2001 / BCRC 20586 / JCM 3761 / NBRC 0622 / NRRL Y-65 / CBS 138) (Yeast).